The primary structure comprises 189 residues: Probable nicotinate-nucleotide adenylyltransferase (189 aa).

It belongs to the NadD family.

The catalysed reaction is nicotinate beta-D-ribonucleotide + ATP + H(+) = deamido-NAD(+) + diphosphate. Its pathway is cofactor biosynthesis; NAD(+) biosynthesis; deamido-NAD(+) from nicotinate D-ribonucleotide: step 1/1. In terms of biological role, catalyzes the reversible adenylation of nicotinate mononucleotide (NaMN) to nicotinic acid adenine dinucleotide (NaAD). The sequence is that of Probable nicotinate-nucleotide adenylyltransferase from Exiguobacterium sibiricum (strain DSM 17290 / CCUG 55495 / CIP 109462 / JCM 13490 / 255-15).